Here is a 302-residue protein sequence, read N- to C-terminus: Tyrosine--tRNA ligase 2 (302 aa).

Position 33 (Y33) interacts with L-tyrosine. A 'HIGH' region motif is present at residues 38 to 47; sequence PTADSLHLGH. Residues Y160 and Q164 each contribute to the L-tyrosine site. The short motif at 220–224 is the 'KMSKS' region element; sequence KFGKS. K223 serves as a coordination point for ATP.

This sequence belongs to the class-I aminoacyl-tRNA synthetase family. TyrS type 1 subfamily. As to quaternary structure, homodimer.

The protein resides in the cytoplasm. It catalyses the reaction tRNA(Tyr) + L-tyrosine + ATP = L-tyrosyl-tRNA(Tyr) + AMP + diphosphate + H(+). Catalyzes the attachment of tyrosine to tRNA(Tyr) in a two-step reaction: tyrosine is first activated by ATP to form Tyr-AMP and then transferred to the acceptor end of tRNA(Tyr). This Streptococcus thermophilus (strain CNRZ 1066) protein is Tyrosine--tRNA ligase 2 (tyrS2).